The sequence spans 323 residues: Putative CRISPR-associated protein SSO1401 (323 aa).

In terms of assembly, sometimes seen associated with the aCascade ribonucleoprotein complex, minimally composed of Csa2 and Cas5a, which binds crRNA. Other probable components of aCascade in strain P1 are Cas6 and Csa5, while SSO1399, Cas5b (SSO1400) and SSO1401 have sometimes been seen weakly associated. The Csa2-Cas5a-crRNA complex also binds target DNA homologous to crRNA, probably forming an R-loop. Purified aCascade forms a filament about 6 nm in width.

Functionally, CRISPR (clustered regularly interspaced short palindromic repeat) is an adaptive immune system that provides protection against mobile genetic elements (viruses, transposable elements and conjugative plasmids). CRISPR clusters contain spacers, sequences complementary to antecedent mobile elements, and target invading nucleic acids. CRISPR clusters are transcribed and processed into CRISPR RNA (crRNA). In Saccharolobus solfataricus (strain ATCC 35092 / DSM 1617 / JCM 11322 / P2) (Sulfolobus solfataricus), this protein is Putative CRISPR-associated protein SSO1401.